Here is a 2195-residue protein sequence, read N- to C-terminus: MGAQVSTQKTGAHETGLNASGSSIIHYTNINYYKDAASNSANRQEFSQDPGKFTEPVKDIMVKSLPALNSPSAEECGYSDRVRSITLGNSTITTQESANVVVGYGRWPEYLKDNEATAEDQPTQPDVATCRFYTLESVTWERDSPGWWWKFPDALKDMGLFGQNMYYHYLGRAGYTLHVQCNASKFHQGCLLVVCVPEAEMGCSQVDGTVNEHGLSEGETAKKFSSTSTNGTNTVQTIVTNAGMGVGVGNLTIYPHQWINLRTNNCATIVMPYINNVPMDNMFRHHNFTLMIIPFVPLDYSSDSSTYVPITVTVAPMCAEYNGLRLSTSLQGLPVMNTPGSNQFLTSDDFQSPSAMPQFDVTPELNIPGEVQNLMEIAEVDSVVPVNNVEGKLDTMEVYRIPVQSGNHQSDQVFGFQVQPGLDSVFKHTLLGEILNYFAHWSGSIKLTFVFCGSAMATGKFLLAYAPPGANAPKNRKDAMLGTHIIWDVGLQSSCVLCVPWISQTHYRLVQQDEYTSAGNVTCWYQTGIVVPAGTPTSCSIMCFVSACNDFSVRLLKDTPFIEQTALLQGDVVEAVENAVARVADTIGSGPSNSQAVPALTAVETGHTSQVTPSDTMQTRHVKNYHSRSESSIENFLSRSACVYMGGYHTTNTDQTKLFASWTISARRMVQMRRKLEIFTYVRFDVEVTFVITSKQDQGSRLGQDMPPLTHQIMYIPPGGPIPKSVTDYAWQTSTNPSIFWTEGNAPPRMSIPFISIGNAYSNFYDGWSHFSQNGVYGYNTLNHMGQIYVRHVNGSSPLPMTSTVRMYFKPKHVKAWVPRPPRLCQYKNASTVNFTPTNVTDKRTSINYIPETVKPDLSNYGAFGYQSGAVYVVNYRVVNRHLATHTDWQNCVWEDYNRDLLISTTTAHGCDVIARCRCSTGVYYCQSKGKHYPVNFEGPGLVEVQESEYYPKRYQSHVLLAAGFSEPGDCGGILRCEHGVIGIVTMGGEGVVGFADVRDLLWLEDDAMEQGVKDYVEQLGNAFGSGFTNQICEQVNLLKESLVGQDSILEKSLKALVKIISALVIVVRNHDDLITVTATLALIGCTSSPWRWLKQKVSQYYGIPMAERQNNGWLKKFTEMTNSCKGMEWISIKIQKFIEWLKVKILPEVREKHEFLNRLKQLPLLESQIATIEQSAPSQSDQEQLFSNVQYFAHYCRKYAPLYASEAKRVFSLEKKMSNYIQFKSKCRIEPVCLLLHGSPGAGKSVATNLIGRSLAEKLNSSVYTLPPDPDHFDGYKQQAVVIVDDLCQNPDGKDVSLFCQMVSSVDFVPPMAALEEKGILFTSLFVLASTNAGSINAPTVSDSRALARRFHFDMNIEVISMYSQNGKINMPMSEKTCDEECCPVNFKRCCPLVCGKAIQFIDRRTQVRYSLDMLVTEMFREYNHRHSVGATLEALFQGPPIYREIKISVAPETPPPPAIADLLKSVDSEAVREYCKEKGWLVPEVNSTLQIEKHVSRAFICLQALTTFVSVAGIIYIIYKLFAGFQGAYTGMPNQKPKVPTLRQAKVQGPAFEFAVAMMKRNSSTVKTEYREFTMLGIYDRWAVLPRHAKPGPTILMNNQEVGVLDAKELVDKDGTNLELTLLKLNRNEKFRDIRGFLAKEEVEANQAVLAINTSKFPNMYIPVGQVTDYGFLNLGGTPTKRMLMSNFPTRAGQCGGVLMSTGKVLGIHVGGNGHQGFSAALLKHYFNDEQGEIEFIESSKDAGFPIINTPSKTKLEPSVFHQVFEGDKEPAVLRNGDPRLKANFEEAIFSKYIGNVNTHVDEYMLEAVDHYAGQLATLDISTEPMRLEDAVYGTEGLEALDLTTSAGYPYVALGIKKRDILSRRTRDLTKLKECMDKYGLNLPMVTYVKDELRSADKVAKGKSRLIEASSLNDSVAMRQTFGNLYRTFHLNPGIVTGSAVGCDPDLFWSKIPVMLDGHLIAFDYSGYDASLSPVWFACLKLLLEKLGYTHKETNYIDYLCNSHHLYRDKHYFERGGMPSGYSGTSMFNSMINNIIIRTLMLKVYKGIDLDQFRMIAYGDDVIASYPWPIDASLLAETGKGYGLIMTPADKGECFNEVTWTNVTFLKRYFRADEQYPFLVHPVMPMKDIHESIRWTKDPKNTQDHVRSLCLLAWHNGEHEYEEFIRKIRSVPVGRCLTLPAFSTLRRKWLDSF.

G2 carries N-myristoyl glycine; by host lipidation. Residues 2–1505 (GAQVSTQKTG…HVSRAFICLQ (1504 aa)) lie on the Cytoplasmic side of the membrane. Residues 567–583 (LLQGDVVEAVENAVARV) are amphipathic alpha-helix. Active-site for protease 2A activity residues include H882 and D900. The Zn(2+) site is built by C917 and C919. C971 acts as the For protease 2A activity in catalysis. Positions 977 and 979 each coordinate Zn(2+). The segment at 1111–1183 (NNGWLKKFTE…EQSAPSQSDQ (73 aa)) is membrane-binding. An oligomerization region spans residues 1111 to 1249 (NNGWLKKFTE…SPGAGKSVAT (139 aa)). The segment at 1132–1136 (SIKIQ) is RNA-binding. An SF3 helicase domain is found at 1215–1371 (EKKMSNYIQF…SMYSQNGKIN (157 aa)). Positions 1379, 1391, and 1396 each coordinate Zn(2+). A C4-type; degenerate zinc finger spans residues 1379–1396 (CDEECCPVNFKRCCPLVC). The RNA-binding stretch occupies residues 1423 to 1430 (EYNHRHSV). Residues 1434–1439 (LEALFQ) form an oligomerization region. An intramembrane segment occupies 1506 to 1521 (ALTTFVSVAGIIYIIY). The Cytoplasmic segment spans residues 1522 to 2195 (KLFAGFQGAY…TLRRKWLDSF (674 aa)). Y1531 bears the O-(5'-phospho-RNA)-tyrosine mark. Residues 1551–1729 (GPAFEFAVAM…FSAALLKHYF (179 aa)) form the Peptidase C3 domain. Residues H1590, E1621, and C1697 each act as for protease 3C activity in the active site. Residues 1960-2076 (GHLIAFDYSG…SYPWPIDASL (117 aa)) form the RdRp catalytic domain. Mg(2+)-binding residues include D1966 and D2062.

This sequence belongs to the picornaviruses polyprotein family. In terms of assembly, interacts with capsid protein VP1 and capsid protein VP3 to form heterotrimeric protomers. As to quaternary structure, interacts with capsid protein VP0, and capsid protein VP3 to form heterotrimeric protomers. Five protomers subsequently associate to form pentamers which serve as building blocks for the capsid. Interacts with capsid protein VP2, capsid protein VP3 and capsid protein VP4 following cleavage of capsid protein VP0. Interacts with capsid protein VP1 and capsid protein VP3 in the mature capsid. In terms of assembly, interacts with capsid protein VP0 and capsid protein VP1 to form heterotrimeric protomers. Five protomers subsequently associate to form pentamers which serve as building blocks for the capsid. Interacts with capsid protein VP4 in the mature capsid. Interacts with protein 2C; this interaction may be important for virion morphogenesis. As to quaternary structure, interacts with capsid protein VP1 and capsid protein VP3. Homodimer. In terms of assembly, homohexamer; forms a hexameric ring structure with 6-fold symmetry characteristic of AAA+ ATPases. Interacts (via N-terminus) with host RTN3 (via reticulon domain); this interaction is important for viral replication. Interacts with capsid protein VP3; this interaction may be important for virion morphogenesis. As to quaternary structure, interacts with protein 3CD. Homodimer. Interacts with host GBF1. Interacts (via GOLD domain) with host ACBD3 (via GOLD domain); this interaction allows the formation of a viral protein 3A/ACBD3 heterotetramer with a 2:2 stoichiometry, which will stimulate the recruitment of host PI4KB in order to synthesize PI4P at the viral RNA replication sites. In terms of assembly, interacts with RNA-directed RNA polymerase. As to quaternary structure, interacts with protein 3AB and with RNA-directed RNA polymerase. Interacts with Viral protein genome-linked and with protein 3CD. Mg(2+) is required as a cofactor. Post-translationally, specific enzymatic cleavages in vivo by the viral proteases yield processing intermediates and the mature proteins. In terms of processing, myristoylation is required for the formation of pentamers during virus assembly. Further assembly of 12 pentamers and a molecule of genomic RNA generates the provirion. During virion maturation, immature virions are rendered infectious following cleavage of VP0 into VP4 and VP2. This maturation seems to be an autocatalytic event triggered by the presence of RNA in the capsid and it is followed by a conformational change infectious virion. Post-translationally, myristoylation is required during RNA encapsidation and formation of the mature virus particle. In terms of processing, VPg is uridylylated by the polymerase into VPg-pUpU. This acts as a nucleotide-peptide primer for the genomic RNA replication.

It localises to the virion. It is found in the host cytoplasm. The protein resides in the host cytoplasmic vesicle membrane. The protein localises to the host nucleus. The enzyme catalyses a ribonucleoside 5'-triphosphate + H2O = a ribonucleoside 5'-diphosphate + phosphate + H(+). It catalyses the reaction Selective cleavage of Tyr-|-Gly bond in the picornavirus polyprotein.. The catalysed reaction is RNA(n) + a ribonucleoside 5'-triphosphate = RNA(n+1) + diphosphate. It carries out the reaction Selective cleavage of Gln-|-Gly bond in the poliovirus polyprotein. In other picornavirus reactions Glu may be substituted for Gln, and Ser or Thr for Gly.. Its activity is regulated as follows. Replication or transcription is subject to high level of random mutations by the nucleotide analog ribavirin. Forms an icosahedral capsid of pseudo T=3 symmetry with capsid proteins VP2 and VP3. The capsid is 300 Angstroms in diameter, composed of 60 copies of each capsid protein and enclosing the viral positive strand RNA genome. Capsid protein VP1 mainly forms the vertices of the capsid. Capsid protein VP1 interacts with host cell receptor to provide virion attachment to target host cells. This attachment induces virion internalization. Tyrosine kinases are probably involved in the entry process. After binding to its receptor, the capsid undergoes conformational changes. Capsid protein VP1 N-terminus (that contains an amphipathic alpha-helix) and capsid protein VP4 are externalized. Together, they shape a pore in the host membrane through which viral genome is translocated to host cell cytoplasm. In terms of biological role, forms an icosahedral capsid of pseudo T=3 symmetry with capsid proteins VP2 and VP3. The capsid is 300 Angstroms in diameter, composed of 60 copies of each capsid protein and enclosing the viral positive strand RNA genome. Functionally, lies on the inner surface of the capsid shell. After binding to the host receptor, the capsid undergoes conformational changes. Capsid protein VP4 is released, Capsid protein VP1 N-terminus is externalized, and together, they shape a pore in the host membrane through which the viral genome is translocated into the host cell cytoplasm. Its function is as follows. Component of immature procapsids, which is cleaved into capsid proteins VP4 and VP2 after maturation. Allows the capsid to remain inactive before the maturation step. Cysteine protease that cleaves viral polyprotein and specific host proteins. It is responsible for the autocatalytic cleavage between the P1 and P2 regions, which is the first cleavage occurring in the polyprotein. Also cleaves the host translation initiation factor EIF4G1, in order to shut down the capped cellular mRNA translation. Inhibits the host nucleus-cytoplasm protein and RNA trafficking by cleaving host members of the nuclear pores. Counteracts stress granule formation probably by antagonizing its assembly or promoting its dissassembly. In terms of biological role, plays an essential role in the virus replication cycle by acting as a viroporin. Creates a pore in the host endoplasmic reticulum and as a consequence releases Ca2+ in the cytoplasm of infected cell. In turn, high levels of cytoplasmic calcium may trigger membrane trafficking and transport of viral ER-associated proteins to viroplasms, sites of viral genome replication. Functionally, induces and associates with structural rearrangements of intracellular membranes. Displays RNA-binding, nucleotide binding and NTPase activities. May play a role in virion morphogenesis and viral RNA encapsidation by interacting with the capsid protein VP3. Its function is as follows. Localizes the viral replication complex to the surface of membranous vesicles. Together with protein 3CD binds the Cis-Active RNA Element (CRE) which is involved in RNA synthesis initiation. Acts as a cofactor to stimulate the activity of 3D polymerase, maybe through a nucleid acid chaperone activity. Localizes the viral replication complex to the surface of membranous vesicles. It inhibits host cell endoplasmic reticulum-to-Golgi apparatus transport and causes the disassembly of the Golgi complex, possibly through GBF1 interaction. This would result in depletion of MHC, trail receptors and IFN receptors at the host cell surface. Plays an essential role in viral RNA replication by recruiting ACBD3 and PI4KB at the viral replication sites, thereby allowing the formation of the rearranged membranous structures where viral replication takes place. In terms of biological role, acts as a primer for viral RNA replication and remains covalently bound to viral genomic RNA. VPg is uridylylated prior to priming replication into VPg-pUpU. The oriI viral genomic sequence may act as a template for this. The VPg-pUpU is then used as primer on the genomic RNA poly(A) by the RNA-dependent RNA polymerase to replicate the viral genome. During genome replication, the VPg-RNA linkage is removed by the host TDP2, thereby accelerating replication. During the late stage of the replication cycle, host TDP2 is excluded from sites of viral RNA synthesis and encapsidation, allowing for the generation of progeny virions. Functionally, involved in the viral replication complex and viral polypeptide maturation. It exhibits protease activity with a specificity and catalytic efficiency that is different from protease 3C. Protein 3CD lacks polymerase activity. The 3C domain in the context of protein 3CD may have an RNA binding activity. Protein 3CD binds to the 5'UTR of the viral genome. Its function is as follows. Replicates the viral genomic RNA on the surface of intracellular membranes. May form linear arrays of subunits that propagate along a strong head-to-tail interaction called interface-I. Covalently attaches UMP to a tyrosine of VPg, which is used to prime RNA synthesis. The positive stranded RNA genome is first replicated at virus induced membranous vesicles, creating a dsRNA genomic replication form. This dsRNA is then used as template to synthesize positive stranded RNA genomes. ss(+)RNA genomes are either translated, replicated or encapsidated. Major viral protease that mediates proteolytic processing of the polyprotein. Cleaves host EIF5B, contributing to host translation shutoff. Also cleaves host PABPC1, contributing to host translation shutoff. Cleaves host NLRP1, triggers host N-glycine-mediated degradation of the autoinhibitory NLRP1 N-terminal fragment. This is Genome polyprotein from Echovirus 11 (strain Gregory).